Reading from the N-terminus, the 166-residue chain is Nicotine metabolites export pump subunit NepB (166 aa).

The next 4 membrane-spanning stretches (helical) occupy residues 51-71 (LHAW…TVIL), 77-97 (FQLP…FFLL), 108-128 (VAYA…GAII), and 133-153 (VTLG…ILNL).

It belongs to the drug/metabolite transporter (DMT) superfamily. Small multidrug resistance (SMR) (TC 2.A.7.1) family. NepA/NepB subfamily. In terms of assembly, the efflux pump is composed of NepA and NepB.

The protein resides in the cell membrane. Functionally, component of an efflux pump responsible for the transport of nicotine breakdown products, in particular methylamine, out of the cell. This pump apparently serves as a metabolic valve for nicotine catabolites and may protect the bacteria from the potentially toxic side effects of these compounds. The sequence is that of Nicotine metabolites export pump subunit NepB (nepB) from Paenarthrobacter nicotinovorans (Arthrobacter nicotinovorans).